Reading from the N-terminus, the 195-residue chain is Granulocyte colony-stimulating factor (195 aa).

The first 21 residues, 1 to 21 (MKLMVLQLLLWHSALWTVHEA), serve as a signal peptide directing secretion. Intrachain disulfides connect cysteine 57–cysteine 63 and cysteine 85–cysteine 95. An O-linked (GalNAc...) threonine glycan is attached at threonine 154.

It belongs to the IL-6 superfamily. In terms of assembly, monomer. Post-translationally, O-glycosylated.

The protein resides in the secreted. Functionally, granulocyte/macrophage colony-stimulating factors are cytokines that act in hematopoiesis by controlling the production, differentiation, and function of 2 related white cell populations of the blood, the granulocytes and the monocytes-macrophages. This CSF induces granulocytes. The sequence is that of Granulocyte colony-stimulating factor (CSF3) from Bos taurus (Bovine).